A 267-amino-acid polypeptide reads, in one-letter code: MLKIGLVGCGAIASLITKALMSDRLNKAEVLAFYDGNLEKAEKLAMETGADFCKSLDELVSKDLDLIVECASVNAVEDTVIKSLNNDKDVIIMSVGAFADKDLFVKLYKLAEKLGKKIYVPSGAVAGIDAVKSGSLGKISEVSLTTTKPVHGLKSALEEQGLNTDEIKEPKIVFEGTVFDAISKFPQNINVSVVLSLASRYPAKVKIIADPNAVVNRHEILVKGSIGTIKTCVENNPCRDNPKTSALAAYSVIRLIKDLSEPVRIGT.

NAD(+) is bound by residues A124 and N190. The active site involves H218.

Belongs to the L-aspartate dehydrogenase family.

It catalyses the reaction L-aspartate + NADP(+) + H2O = oxaloacetate + NH4(+) + NADPH + H(+). It carries out the reaction L-aspartate + NAD(+) + H2O = oxaloacetate + NH4(+) + NADH + H(+). It functions in the pathway cofactor biosynthesis; NAD(+) biosynthesis; iminoaspartate from L-aspartate (dehydrogenase route): step 1/1. Its function is as follows. Specifically catalyzes the NAD or NADP-dependent dehydrogenation of L-aspartate to iminoaspartate. This is L-aspartate dehydrogenase from Methanococcus maripaludis (strain DSM 14266 / JCM 13030 / NBRC 101832 / S2 / LL).